A 25-amino-acid polypeptide reads, in one-letter code: Ocellatin-1 (25 aa).

Valine 25 carries the valine amide modification.

As to expression, expressed by the skin dorsal glands.

It localises to the secreted. Its function is as follows. Has hemolytic activity against human erythrocytes and antibacterial activity against the Gram-negative bacterium E.coli. This chain is Ocellatin-1, found in Leptodactylus ocellatus (Argus frog).